The following is a 166-amino-acid chain: Small ribosomal subunit protein uS5 (166 aa).

The region spanning 11–74 (LDDNVVAINR…EAAKKNLITV (64 aa)) is the S5 DRBM domain.

The protein belongs to the universal ribosomal protein uS5 family. In terms of assembly, part of the 30S ribosomal subunit. Contacts proteins S4 and S8.

In terms of biological role, with S4 and S12 plays an important role in translational accuracy. Functionally, located at the back of the 30S subunit body where it stabilizes the conformation of the head with respect to the body. The chain is Small ribosomal subunit protein uS5 from Lactiplantibacillus plantarum (strain ATCC BAA-793 / NCIMB 8826 / WCFS1) (Lactobacillus plantarum).